The following is a 425-amino-acid chain: Inositol hexakisphosphate kinase 2 (425 aa).

Residues Glu-206–Leu-208 and Asp-219 contribute to the ATP site. Substrate-binding positions include Pro-215–Gly-223, Lys-221, and Lys-235–Lys-242. Asp-382 lines the ATP pocket. His-385 contacts substrate.

Belongs to the inositol phosphokinase (IPK) family. Detected in kidney, intestine, liver and heart.

Its subcellular location is the nucleus. It catalyses the reaction 1D-myo-inositol hexakisphosphate + ATP = 5-diphospho-1D-myo-inositol 1,2,3,4,6-pentakisphosphate + ADP. It functions in the pathway phospholipid metabolism; phosphatidylinositol metabolism. In terms of biological role, converts inositol hexakisphosphate (InsP6) to diphosphoinositol pentakisphosphate (InsP7/PP-InsP5). The chain is Inositol hexakisphosphate kinase 2 (IP6K2) from Oryctolagus cuniculus (Rabbit).